Consider the following 529-residue polypeptide: MKNELYADEIAARRTFAIISHPDAGKTTITEKVLLFGQAIQTAGTVKGRGSNQHAKSDWMEMEKQRGISITTSVMQFPYRQALVNLLDTPGHEDFSEDTYRTLTAVDCCLMVIDAAKGVEDRTRKLMEVTRLRDTPILTFMNKVDRDIRDPMELLDEVESELRIACAPITWPIGCGKLFKGIYHLAKDETYLYQSGQGHTIQAVRVVKGLDNPELDQAVGEDLAAQLREELELVQGASHPFDEQAFLAGELTPIFFGTALGNFGIDHMLDGLVAWAPPPMPRQTDVRVVSAREEKFTGFVFKIQANMDPRHRDRVAFLRVVSGRYEKSMKLRQVRTGKDVVIADALTFMAGDRSHIEEAYAGDIIGLHNHGTIQIGDTFTQGEELKFTGIPNFAPELFRRIRLRDPLKQKQLLKGLVQLSEEGAVQVFRPLANNDLIVGAVGVLQFDVVVARLKSEYNVEALYEPVNVSTARWVECGDAKKLEEFKRKNELNLVLDGGDNLSYIAPSMVNLNLTRERYPDIQFHKTREH.

Residues 11–280 (AARRTFAIIS…GLVAWAPPPM (270 aa)) form the tr-type G domain. GTP contacts are provided by residues 20 to 27 (SHPDAGKT), 88 to 92 (DTPGH), and 142 to 145 (NKVD).

This sequence belongs to the TRAFAC class translation factor GTPase superfamily. Classic translation factor GTPase family. PrfC subfamily.

It localises to the cytoplasm. In terms of biological role, increases the formation of ribosomal termination complexes and stimulates activities of RF-1 and RF-2. It binds guanine nucleotides and has strong preference for UGA stop codons. It may interact directly with the ribosome. The stimulation of RF-1 and RF-2 is significantly reduced by GTP and GDP, but not by GMP. The polypeptide is Peptide chain release factor 3 (Sodalis glossinidius (strain morsitans)).